The chain runs to 194 residues: MNKVTKTAIAGLLALFAGNAAATDGEIVFDGEILKSACEINDSDKKIEVALGHYNAEQFRNIGERSPKIPFTIPLVNCPMTGWEHDNGNVEASFRLWLETRDNGTVPNFPNLAKVGSFAGIAATGVGIRIDDAESGNIMPLNAMGNDNTVYQIPAESNGIVNVDLIAYYVSTVVPSEITPGEADAIVNVTLDYR.

The first 22 residues, 1-22 (MNKVTKTAIAGLLALFAGNAAA), serve as a signal peptide directing secretion. The cysteines at positions 38 and 78 are disulfide-linked.

This sequence belongs to the fimbrial protein family.

Its subcellular location is the fimbrium. In terms of biological role, part of the yraHIJK fimbrial operon. Could contribute to adhesion to various surfaces in specific environmental niches. Increases adhesion to eukaryotic T24 bladder epithelial cells in the absence of fim operon. This is an uncharacterized protein from Escherichia coli (strain K12).